Reading from the N-terminus, the 338-residue chain is Elongation factor Ts, mitochondrial (338 aa).

The N-terminal 55 residues, 1-55 (MSLLRSLRLCLVARTGSCPLSALGPGPLLPSLQAGLPLLQSPQQWHTFHSGSWLS), are a transit peptide targeting the mitochondrion. 3 positions are modified to N6-succinyllysine: Lys-89, Lys-146, and Lys-205. Ser-283 bears the Phosphoserine mark.

It belongs to the EF-Ts family.

The protein resides in the mitochondrion. In terms of biological role, associates with the EF-Tu.GDP complex and induces the exchange of GDP to GTP. It remains bound to the aminoacyl-tRNA.EF-Tu.GTP complex up to the GTP hydrolysis stage on the ribosome. In Bos taurus (Bovine), this protein is Elongation factor Ts, mitochondrial.